Consider the following 338-residue polypeptide: Phenylalanine--tRNA ligase alpha subunit (338 aa).

Position 252 (Glu-252) interacts with Mg(2+).

Belongs to the class-II aminoacyl-tRNA synthetase family. Phe-tRNA synthetase alpha subunit type 1 subfamily. Tetramer of two alpha and two beta subunits. It depends on Mg(2+) as a cofactor.

It localises to the cytoplasm. The catalysed reaction is tRNA(Phe) + L-phenylalanine + ATP = L-phenylalanyl-tRNA(Phe) + AMP + diphosphate + H(+). The polypeptide is Phenylalanine--tRNA ligase alpha subunit (Pseudomonas fluorescens (strain SBW25)).